Here is a 155-residue protein sequence, read N- to C-terminus: Small ribosomal subunit protein eS19B (155 aa).

This sequence belongs to the eukaryotic ribosomal protein eS19 family.

This Drosophila melanogaster (Fruit fly) protein is Small ribosomal subunit protein eS19B (RpS19b).